Here is a 448-residue protein sequence, read N- to C-terminus: Vacuolar amino acid transporter 6 (448 aa).

Topologically, residues Met-1–Ser-7 are cytoplasmic. The helical transmembrane segment at Gly-8–Phe-28 threads the bilayer. Residues Lys-29–Gly-32 lie on the Vacuolar side of the membrane. The helical transmembrane segment at Leu-33 to Ile-53 threads the bilayer. At Gln-54 to Gly-80 the chain is on the cytoplasmic side. A helical membrane pass occupies residues Ile-81–Val-101. At Val-102 to Gln-125 the chain is on the vacuolar side. A helical transmembrane segment spans residues Ile-126 to Leu-146. Over Arg-147–Ser-150 the chain is Cytoplasmic. Residues Met-151–Pro-171 traverse the membrane as a helical segment. Residues Ser-172 to Val-195 are Vacuolar-facing. Residues Leu-196–Ile-216 traverse the membrane as a helical segment. Residues Asn-217 to Lys-229 are Cytoplasmic-facing. The chain crosses the membrane as a helical span at residues Ile-230–Tyr-250. The Vacuolar segment spans residues Leu-251 to Gln-267. The helical transmembrane segment at Ala-268–Leu-288 threads the bilayer. At Gln-289–Ser-357 the chain is on the cytoplasmic side. Ser-344 is modified (phosphoserine). The helical transmembrane segment at Phe-358–Ser-378 threads the bilayer. Residues Leu-379 to Arg-381 are Vacuolar-facing. Residues Val-382–Phe-402 form a helical membrane-spanning segment. Residues Gly-403 to Tyr-424 are Cytoplasmic-facing. A helical membrane pass occupies residues Thr-425–Leu-445. Residues Lys-446–Asn-448 are Vacuolar-facing.

It belongs to the amino acid/polyamine transporter 2 family.

It is found in the vacuole membrane. Functionally, involved in amino acid efflux from the vacuole to the cytoplasm. Capable of transporting aspartate and glutamate. Requires ATP for function. This chain is Vacuolar amino acid transporter 6 (AVT6), found in Saccharomyces cerevisiae (strain ATCC 204508 / S288c) (Baker's yeast).